Here is a 558-residue protein sequence, read N- to C-terminus: Hsp70-Hsp90 organizing protein 3 (558 aa).

4 TPR repeats span residues 2–35 (AEEAKSKGNAAFSSGDYATAITHFTEAINLSPTN), 37–69 (ILYSNRSASYASLHRYEEALSDAKKTIELKPDW), 70–103 (SKGYSRLGAAFIGLSKFDEAVDSYKKGLEIDPSN), and 136–173 (EKLTADPGTRVYLEQDDFVKTMKEIQRNPNNLNLYMKD). The 40-residue stretch at 131–170 (GKEMWEKLTADPGTRVYLEQDDFVKTMKEIQRNPNNLNLY) folds into the STI1 1 domain. The segment at 191–232 (SSGEDTEMKEADERKEPEPEMEPMELTEEERQKKERKEKALK) is disordered. Over residues 196–208 (TEMKEADERKEPE) the composition is skewed to basic and acidic residues. The segment covering 209-218 (PEMEPMELTE) has biased composition (acidic residues). Basic and acidic residues predominate over residues 219 to 232 (EERQKKERKEKALK). The short motif at 227–244 (KEKALKEKGEGNVAYKKK) is the Bipartite nuclear localization signal element. TPR repeat units follow at residues 230–263 (ALKEKGEGNVAYKKKDFGRAVEHYTKAMELDDED), 265–297 (SYLTNRAAVYLEMGKYEECIEDCDKAVERGREL), 305–342 (ARALTRKGSALVKMARCSKDFEPAIETFQKALTEHRNP), 369–402 (AEEEREKGNGFFKEQKYPEAVKHYSEAIKRNPND), 404–436 (RAYSNRAACYTKLGALPEGLKDAEKCIELDPSF), and 437–470 (TKGYSRKGAIQFFMKEYDKAMETYQEGLKHDPKN). Residues 507 to 546 (DPEVQNILSDPVMRQVLVDFQENPKAAQEHMKNPMVMNKI) form the STI1 2 domain.

As to quaternary structure, co-chaperone that forms a complex with HSP70 and HSP90 and preproteins (e.g. chloroplast preproteins). In terms of processing, phosphorylated. Post-translationally, acetylated.

The protein resides in the cytoplasm. The protein localises to the nucleus. In terms of biological role, mediates the association of the molecular chaperones HSP70 and HSP90. Mediates nuclear encoded chloroplast preproteins binding to HSP90 prior to chloroplastic sorting. Involved in acclimation to heat. This is Hsp70-Hsp90 organizing protein 3 (HOP3) from Arabidopsis thaliana (Mouse-ear cress).